The sequence spans 675 residues: Heat shock 70 kDa protein, mitochondrial (675 aa).

The N-terminal 51 residues, 1-51 (MAAVLRSLRRRDVASATFSAYRSLTGSTKPAYVAQKWSCLARPFSSRPAGN), are a transit peptide targeting the mitochondrion. A disordered region spans residues 638-675 (VSKIGEHMSGGSSGGSSAGGSQGGGDQAPEAEYEEVKK). Over residues 648 to 663 (GSSGGSSAGGSQGGGD) the composition is skewed to gly residues. Over residues 666-675 (PEAEYEEVKK) the composition is skewed to acidic residues.

This sequence belongs to the heat shock protein 70 family.

The protein localises to the mitochondrion. This is Heat shock 70 kDa protein, mitochondrial from Phaseolus vulgaris (Kidney bean).